The chain runs to 301 residues: Homoserine kinase (301 aa).

89 to 99 (KPGSGLGSSSA) is an ATP binding site.

This sequence belongs to the GHMP kinase family. Homoserine kinase subfamily.

It localises to the cytoplasm. It catalyses the reaction L-homoserine + ATP = O-phospho-L-homoserine + ADP + H(+). It functions in the pathway amino-acid biosynthesis; L-threonine biosynthesis; L-threonine from L-aspartate: step 4/5. Functionally, catalyzes the ATP-dependent phosphorylation of L-homoserine to L-homoserine phosphate. This Methanococcus maripaludis (strain DSM 14266 / JCM 13030 / NBRC 101832 / S2 / LL) protein is Homoserine kinase.